We begin with the raw amino-acid sequence, 158 residues long: C-type lectin BfL-1 (158 aa).

Residues 1–21 form the signal peptide; the sequence is MGHFTFIGLCLLAMFLSLSGA. Intrachain disulfides connect C26-C37, C54-C154, C61-C156, and C129-C146. Residues 33–155 enclose the C-type lectin domain; it reads KNGLCYKVFS…CAALRPFLCQ (123 aa). Ca(2+) is bound by residues Q119, D121, and E127. Residues 119–121 carry the Galactose-binding motif; that stretch reads QPD. A glycan (N-linked (GlcNAc...) asparagine) is linked at N134. Ca(2+) contacts are provided by N142 and D143.

Belongs to the true venom lectin family. Homodimer; non-covalently linked. Expressed by the venom gland.

Its subcellular location is the secreted. Functionally, galactose-binding lectin which recognizes specific carbohydrate structures and agglutinates a variety of animal cells by binding to cell-surface glycoproteins and glycolipids. May be a calcium-dependent lectin. The sequence is that of C-type lectin BfL-1 from Bungarus fasciatus (Banded krait).